The primary structure comprises 308 residues: Glutamyl-Q tRNA(Asp) synthetase (308 aa).

Residues 19–23 (RFAPS) and Glu55 contribute to the L-glutamate site. Positions 22 to 32 (PSPSGELHFGS) match the 'HIGH' region motif. 4 residues coordinate Zn(2+): Cys111, Cys113, Tyr125, and Cys129. L-glutamate-binding residues include Tyr182 and Arg200. Residues 238-242 (KLSKQ) carry the 'KMSKS' region motif. Lys241 lines the ATP pocket.

Belongs to the class-I aminoacyl-tRNA synthetase family. GluQ subfamily. It depends on Zn(2+) as a cofactor.

Its function is as follows. Catalyzes the tRNA-independent activation of glutamate in presence of ATP and the subsequent transfer of glutamate onto a tRNA(Asp). Glutamate is transferred on the 2-amino-5-(4,5-dihydroxy-2-cyclopenten-1-yl) moiety of the queuosine in the wobble position of the QUC anticodon. This chain is Glutamyl-Q tRNA(Asp) synthetase, found in Shigella flexneri.